A 55-amino-acid polypeptide reads, in one-letter code: Large ribosomal subunit protein bL33 (55 aa).

The protein belongs to the bacterial ribosomal protein bL33 family.

The sequence is that of Large ribosomal subunit protein bL33 from Vibrio cholerae serotype O1 (strain ATCC 39541 / Classical Ogawa 395 / O395).